The chain runs to 520 residues: 2-isopropylmalate synthase (520 aa).

The 263-residue stretch at 5 to 267 (VIIFDTTLRD…HTNINHQEIY (263 aa)) folds into the Pyruvate carboxyltransferase domain. Residues Asp-14, His-202, His-204, and Asn-238 each coordinate Mn(2+). The tract at residues 392-520 (RLDYFSVQSG…RLQQNNQEMV (129 aa)) is regulatory domain.

It belongs to the alpha-IPM synthase/homocitrate synthase family. LeuA type 1 subfamily. In terms of assembly, homodimer. Requires Mn(2+) as cofactor.

It localises to the cytoplasm. It catalyses the reaction 3-methyl-2-oxobutanoate + acetyl-CoA + H2O = (2S)-2-isopropylmalate + CoA + H(+). The protein operates within amino-acid biosynthesis; L-leucine biosynthesis; L-leucine from 3-methyl-2-oxobutanoate: step 1/4. Its function is as follows. Catalyzes the condensation of the acetyl group of acetyl-CoA with 3-methyl-2-oxobutanoate (2-ketoisovalerate) to form 3-carboxy-3-hydroxy-4-methylpentanoate (2-isopropylmalate). This is 2-isopropylmalate synthase from Yersinia pseudotuberculosis serotype O:1b (strain IP 31758).